The following is a 747-amino-acid chain: Rho GTPase-activating protein 24 (747 aa).

Disordered regions lie at residues 1–20 (MEERCESTESPQGQGRKNTK) and 327–475 (FPKD…GTHS). Residues 17 to 123 (KNTKCGWLRK…WVKSIRRVIW (107 aa)) form the PH domain. The Rho-GAP domain maps to 133–327 (QKLEDTVRYE…VMISKHDRLF (195 aa)). Polar residues-rich tracts occupy residues 334-346 (QSKPQDGPNSNNN) and 355-367 (GQLQNKENNNTKE). S368, S390, S395, S397, S401, S412, S414, and S436 each carry phosphoserine. Over residues 368-380 (SPVRRCSWDKPES) the composition is skewed to basic and acidic residues. Residues 381–404 (PQRSSVDNGSPTALSGSKTNSPRN) are compositionally biased toward polar residues. Residues 431-475 (IVTNGSFSSSNAEGVEKPQTTPNGSLQARRTSSLKSSGTKMGTHS) are compositionally biased toward polar residues. T451 carries the post-translational modification Phosphothreonine. S494 is subject to Phosphoserine. The disordered stretch occupies residues 581-639 (DFYVGNFEDPVLDGPPQDDLSHPGDYENKSDRRSVGGRSSRATSSSDNSETFVGNTSSN). Residues 599–614 (DLSHPGDYENKSDRRS) are compositionally biased toward basic and acidic residues. Positions 616–629 (GGRSSRATSSSDNS) are enriched in low complexity. Residues 630–639 (ETFVGNTSSN) are compositionally biased toward polar residues. The stretch at 648 to 728 (SSLKQEMTKQ…KEMEQFFSTF (81 aa)) forms a coiled coil.

Interacts with FLNA. Phosphorylated by ROCK, leading to activate the RacGAP activity.

The protein localises to the cytoplasm. It is found in the cytoskeleton. Its subcellular location is the cell junction. It localises to the adherens junction. The protein resides in the focal adhesion. The protein localises to the cell projection. Rho GTPase-activating protein involved in cell polarity, cell morphology and cytoskeletal organization. Acts as a GTPase activator for the Rac-type GTPase by converting it to an inactive GDP-bound state. Controls actin remodeling by inactivating Rac downstream of Rho leading to suppress leading edge protrusion and promotes cell retraction to achieve cellular polarity. Able to suppress RAC1 and CDC42 activity in vitro. Overexpression induces cell rounding with partial or complete disruption of actin stress fibers and formation of membrane ruffles, lamellipodia, and filopodia. Isoform 2 is a vascular cell-specific GAP involved in modulation of angiogenesis. This Mus musculus (Mouse) protein is Rho GTPase-activating protein 24 (Arhgap24).